Consider the following 86-residue polypeptide: Putative defensin-like protein 211 (86 aa).

A signal peptide spans 1–19 (MNTIVLFLTLLILVSSCTS). Disulfide bonds link C55–C72, C58–C77, and C62–C79.

It belongs to the DEFL family.

Its subcellular location is the secreted. The chain is Putative defensin-like protein 211 from Arabidopsis thaliana (Mouse-ear cress).